A 131-amino-acid polypeptide reads, in one-letter code: MRHRVKRHRLGRYGSHRKSLLRNLSREIVEHGSIVTTTAKAKALKILMDKLVSKAIEAATTDDKAKSVHLRRQINAVLGDRRLTNKLVDEIAKNYVGRHGGYVRVLRIGFRRGDAAEMSLVQLVEASSQEG.

This sequence belongs to the bacterial ribosomal protein bL17 family. In terms of assembly, part of the 50S ribosomal subunit. Contacts protein L32.

The protein is Large ribosomal subunit protein bL17 of Thermotoga sp. (strain RQ2).